The sequence spans 366 residues: tRNA/tmRNA (uracil-C(5))-methyltransferase (366 aa).

5 residues coordinate S-adenosyl-L-methionine: Gln-190, Tyr-218, Asn-223, Glu-239, and Asp-299. Cys-324 serves as the catalytic Nucleophile. Glu-358 serves as the catalytic Proton acceptor.

This sequence belongs to the class I-like SAM-binding methyltransferase superfamily. RNA M5U methyltransferase family. TrmA subfamily.

It catalyses the reaction uridine(54) in tRNA + S-adenosyl-L-methionine = 5-methyluridine(54) in tRNA + S-adenosyl-L-homocysteine + H(+). The enzyme catalyses uridine(341) in tmRNA + S-adenosyl-L-methionine = 5-methyluridine(341) in tmRNA + S-adenosyl-L-homocysteine + H(+). Its function is as follows. Dual-specificity methyltransferase that catalyzes the formation of 5-methyluridine at position 54 (m5U54) in all tRNAs, and that of position 341 (m5U341) in tmRNA (transfer-mRNA). This chain is tRNA/tmRNA (uracil-C(5))-methyltransferase, found in Salmonella agona (strain SL483).